The sequence spans 443 residues: Histidine--tRNA ligase (443 aa).

The span at 1-20 (MTESEKKQQKPQKAKAEKFK) shows a compositional bias: basic and acidic residues. The tract at residues 1–21 (MTESEKKQQKPQKAKAEKFKA) is disordered.

The protein belongs to the class-II aminoacyl-tRNA synthetase family. Homodimer.

It localises to the cytoplasm. It catalyses the reaction tRNA(His) + L-histidine + ATP = L-histidyl-tRNA(His) + AMP + diphosphate + H(+). This is Histidine--tRNA ligase from Corynebacterium jeikeium (strain K411).